Reading from the N-terminus, the 345-residue chain is Anthranilate phosphoribosyltransferase 1 (345 aa).

Residues G86, 89-90, T94, 96-99, 114-122, and S126 contribute to the 5-phospho-alpha-D-ribose 1-diphosphate site; these read GD, NIST, and KHGGRGVSS. G86 is an anthranilate binding site. Residue S98 participates in Mg(2+) binding. R172 contributes to the anthranilate binding site. Residues D231 and E232 each contribute to the Mg(2+) site.

The protein belongs to the anthranilate phosphoribosyltransferase family. As to quaternary structure, homodimer. Mg(2+) is required as a cofactor.

The catalysed reaction is N-(5-phospho-beta-D-ribosyl)anthranilate + diphosphate = 5-phospho-alpha-D-ribose 1-diphosphate + anthranilate. The protein operates within amino-acid biosynthesis; L-tryptophan biosynthesis; L-tryptophan from chorismate: step 2/5. Functionally, catalyzes the transfer of the phosphoribosyl group of 5-phosphorylribose-1-pyrophosphate (PRPP) to anthranilate to yield N-(5'-phosphoribosyl)-anthranilate (PRA). This Ralstonia nicotianae (strain ATCC BAA-1114 / GMI1000) (Ralstonia solanacearum) protein is Anthranilate phosphoribosyltransferase 1.